The following is a 574-amino-acid chain: Phosphate permease PHO89 (574 aa).

Over 1–5 (MALHQ) the chain is Extracellular. A helical transmembrane segment spans residues 6–26 (FDYIFAIAMLFAFLDAFNIGA). The Cytoplasmic segment spans residues 27–43 (NDVANSFASSISSRSLK). The helical transmembrane segment at 44–64 (YWQAMVLAGLCEFLGAVLAGA) threads the bilayer. The Extracellular segment spans residues 65-84 (RVSGTIKNNIIDSSIFTNDP). The chain crosses the membrane as a helical span at residues 85–105 (AVLMLTMTSALIGSSCWLTFA). Over 106–117 (TAIGMPVSTTHS) the chain is Cytoplasmic. The chain crosses the membrane as a helical span at residues 118-138 (IVGGTIGAGIAAGGANGVVWG). The Extracellular portion of the chain corresponds to 139–145 (WSGVSQI). Residues 146-166 (IASWFIAPILAGAIAAIVFSI) form a helical membrane-spanning segment. Residues 167 to 184 (SRFSVLEVKSLERSIKNA) are Cytoplasmic-facing. A helical transmembrane segment spans residues 185–205 (LLLVGVLVFATFSILTMLIVW). Topologically, residues 206-222 (KGSPNLHLDDLSETETA) are extracellular. Residues 223-243 (VSIVLTGAIASIVYFIFFYPF) traverse the membrane as a helical segment. Topologically, residues 244–354 (YRRKVLDQDW…SLLKQGPKKW (111 aa)) are cytoplasmic. Residues 301–332 (EDEENKAASNSNDSVKNKEDIQEVDLVRTETE) are disordered. The segment covering 315 to 332 (VKNKEDIQEVDLVRTETE) has biased composition (basic and acidic residues). The helical transmembrane segment at 355 to 375 (PLLFWLVISHGWTQDVIHAQV) threads the bilayer. Topologically, residues 376–398 (NDRDMLSGDLKGMYERSKFYDNR) are extracellular. Residues 399-419 (VEYIYSVLQAITAATMSFAHG) form a helical membrane-spanning segment. Topologically, residues 420-447 (ANDVANATGPLSAVYVIWKTNTIGAKSE) are cytoplasmic. Residues 448-468 (VPVWVLAYGGVALVIGCWTYG) traverse the membrane as a helical segment. Residues 469–503 (YNIIKNLGNKMILQSPSRGFSIELAVAITTVMATQ) are Extracellular-facing. Residues 504-524 (LGIPTSTTQIAVGGIVAVGLC) form a helical membrane-spanning segment. The Cytoplasmic portion of the chain corresponds to 525–541 (NKDLKSVNWRMVAWCYS). A helical membrane pass occupies residues 542-562 (GWFLTLPIAGLIAGIINGIIL). The Extracellular portion of the chain corresponds to 563–574 (NAPRFGVEYQMT).

The protein belongs to the inorganic phosphate transporter (PiT) (TC 2.A.20) family. In terms of assembly, forms homodimers and higher order homooligomers.

The protein localises to the cell membrane. It catalyses the reaction 2 Na(+)(out) + phosphate(out) = 2 Na(+)(in) + phosphate(in). Its activity is regulated as follows. Weakly stimulated by Li(+) and K(+). Inhibited by monensin. Inhibited by phosphonoacetic acid. Inhibited by methylphosphonate. Inhibited by dimethylphosphonate. Sodium-phosphate symporter. Active in early growth phase. The sequence is that of Phosphate permease PHO89 (PHO89) from Saccharomyces cerevisiae (strain ATCC 204508 / S288c) (Baker's yeast).